Consider the following 396-residue polypeptide: tRNA (guanine-N(7)-)-methyltransferase (396 aa).

Residues glutamate 125, glutamate 150, and aspartate 177 each contribute to the S-adenosyl-L-methionine site. 2 residues coordinate substrate: lysine 203 and aspartate 233.

The protein belongs to the class I-like SAM-binding methyltransferase superfamily. TrmB family.

It carries out the reaction guanosine(46) in tRNA + S-adenosyl-L-methionine = N(7)-methylguanosine(46) in tRNA + S-adenosyl-L-homocysteine. It participates in tRNA modification; N(7)-methylguanine-tRNA biosynthesis. Catalyzes the formation of N(7)-methylguanine at position 46 (m7G46) in tRNA. This is tRNA (guanine-N(7)-)-methyltransferase from Helicobacter hepaticus (strain ATCC 51449 / 3B1).